Consider the following 643-residue polypeptide: Carboxy-terminal kinesin 2 (643 aa).

Disordered regions lie at residues 1–42 (MDST…SSLE) and 81–101 (MRPK…KTKV). Residues 1–116 (MDSTDKKVQV…QPAAIGAEKK (116 aa)) form a globular region. Polar residues predominate over residues 88-101 (PGITSTSFSGKTKV). Positions 117–296 (KRAAWDLKGQ…LVQELKGNIR (180 aa)) form a coiled coil. One can recognise a Kinesin motor domain in the interval 294-633 (NIRVFCRVRP…LRFASKVNEC (340 aa)). 386 to 393 (GQTGSGKT) provides a ligand contact to ATP.

Belongs to the TRAFAC class myosin-kinesin ATPase superfamily. Kinesin family. NCD subfamily.

It is found in the cytoplasm. The protein localises to the cytoskeleton. Its function is as follows. Promotes mitotic spindle assembly. This is Carboxy-terminal kinesin 2 from Xenopus laevis (African clawed frog).